We begin with the raw amino-acid sequence, 548 residues long: Chaperonin GroEL (548 aa).

ATP contacts are provided by residues 29–32 (TMGP), lysine 50, 86–90 (DGTTT), glycine 414, 478–480 (NAA), and aspartate 494.

Belongs to the chaperonin (HSP60) family. As to quaternary structure, forms a cylinder of 14 subunits composed of two heptameric rings stacked back-to-back. Interacts with the co-chaperonin GroES.

It localises to the cytoplasm. It catalyses the reaction ATP + H2O + a folded polypeptide = ADP + phosphate + an unfolded polypeptide.. Functionally, together with its co-chaperonin GroES, plays an essential role in assisting protein folding. The GroEL-GroES system forms a nano-cage that allows encapsulation of the non-native substrate proteins and provides a physical environment optimized to promote and accelerate protein folding. Its function is as follows. May play a protective role against the defense mechanisms generated by the infected macrophages. The sequence is that of Chaperonin GroEL from Legionella pneumophila.